We begin with the raw amino-acid sequence, 294 residues long: Glyceraldehyde-3-phosphate dehydrogenase (294 aa).

NAD(+)-binding residues include Asp-19, Lys-63, and Thr-105. D-glyceraldehyde 3-phosphate is bound by residues 134 to 136, Thr-165, 194 to 195, and Arg-217; these read SCT and TG. The active-site Nucleophile is Cys-135.

It belongs to the glyceraldehyde-3-phosphate dehydrogenase family. In terms of assembly, homotetramer.

The protein resides in the cytoplasm. The catalysed reaction is D-glyceraldehyde 3-phosphate + phosphate + NAD(+) = (2R)-3-phospho-glyceroyl phosphate + NADH + H(+). It functions in the pathway carbohydrate degradation; glycolysis; pyruvate from D-glyceraldehyde 3-phosphate: step 1/5. Its function is as follows. Catalyzes the oxidative phosphorylation of glyceraldehyde 3-phosphate (G3P) to 1,3-bisphosphoglycerate (BPG) using the cofactor NAD. The first reaction step involves the formation of a hemiacetal intermediate between G3P and a cysteine residue, and this hemiacetal intermediate is then oxidized to a thioester, with concomitant reduction of NAD to NADH. The reduced NADH is then exchanged with the second NAD, and the thioester is attacked by a nucleophilic inorganic phosphate to produce BPG. The protein is Glyceraldehyde-3-phosphate dehydrogenase (gap) of Klebsiella aerogenes (Enterobacter aerogenes).